Here is a 928-residue protein sequence, read N- to C-terminus: Neuropilin-1 (928 aa).

The signal sequence occupies residues 1 to 21 (MLLRLLSCCCWLLCSLRSSWA). The Extracellular portion of the chain corresponds to 22–860 (SRNDKCGDTI…PGNVLKTLDP (839 aa)). 3 disulfides stabilise this stretch: cysteine 27–cysteine 54, cysteine 82–cysteine 104, and cysteine 147–cysteine 173. CUB domains lie at 27 to 141 (CGDT…YEVF) and 147 to 265 (CSRN…FSVV). An N-linked (GlcNAc...) asparagine glycan is attached at asparagine 150. Ca(2+) contacts are provided by glutamate 195, aspartate 209, and aspartate 250. A disulfide bridge connects residues cysteine 206 and cysteine 228. 3 N-linked (GlcNAc...) asparagine glycosylation sites follow: asparagine 261, asparagine 300, and asparagine 523. Cystine bridges form between cysteine 275-cysteine 424 and cysteine 431-cysteine 584. 2 consecutive F5/8 type C domains span residues 275–424 (CKEA…LYGC) and 431–584 (CSRM…LLGC). The O-linked (Xyl...) (chondroitin sulfate) serine; alternate glycan is linked to serine 613. Serine 613 is a glycosylation site (O-linked (Xyl...) (heparan sulfate) serine; alternate). The tract at residues 624–645 (GATGQSTETPTVEASPEEPDMT) is disordered. Polar residues predominate over residues 625 to 635 (ATGQSTETPTV). One can recognise an MAM domain in the interval 646 to 812 (HSDLDCKFGW…NHISPSQCRA (167 aa)). Serine 834 carries O-linked (Xyl...) (chondroitin sulfate) serine glycosylation. N-linked (GlcNAc...) asparagine glycosylation is present at asparagine 844. A helical membrane pass occupies residues 861–883 (ILITIIAMSALGVLLGAICGVVL). At 884–928 (YCACWHNGMSERNLSALENYNFELVDGVKLKKDKLNTQNSYSEAS) the chain is on the cytoplasmic side.

Belongs to the neuropilin family. As to quaternary structure, homodimer, and heterodimer. Retinal ganglion cells and visual center neurons.

The protein localises to the mitochondrion membrane. It localises to the cell membrane. Functionally, receptor involved in the development of the cardiovascular system, in angiogenesis, in the formation of certain neuronal circuits and in organogenesis outside the nervous system. Mediates the chemorepulsant activity of semaphorins. Binding to VEGFA initiates a signaling pathway needed for motor neuron axon guidance and cell body migration, including for the caudal migration of facial motor neurons from rhombomere 4 to rhombomere 6 during embryonic development. Regulates mitochondrial iron transport via interaction. This chain is Neuropilin-1 (nrp1), found in Xenopus laevis (African clawed frog).